The following is a 580-amino-acid chain: MGWEYAQVHLKYTIPFGVVLAAVYRPLMSRLDVFKLVFLITVAVVSTIPWDSYLIKNRIWTYPPGVVVGLTAWDIPAEELFFFVIQTFNTSLLYMILSKPTFHPIYLSKKTGWGKIAGQILFASAIIFGLVSVSSGGEGMYMGLILIWACPFLLFLWSISYQFIVNLPWTNTALPIALPTLYLWVVDTFALRRGTWSITSGTKYGVVLWDGLEIEEAVFFLLTNTLIVFGLIACDNNLAILDTFPEHFPRTKGVPSLLTIIRTLILPKEKYDEERIQGLVSAVALLRKKSRSFYLASGTFEGRLRIDLIRLYAFCRAADDLVDEAPSVDDSRASIEKLRKFLDLAYEENQEEPSQRLREYVTSSIPEMFHMALLQLPTYYLPKQPLDDLLKGFDTDLLFDRKSGAFPIETTEDLDIYGSRVAGTVAELCNHLILYHTPEAVPEDIQREVVASGQEMGIALQYVNIARDIKTDAEIDRVYLPLSWLKEAQLTPEDVIQQPHGPTIEALRHKLLDRAFEKYNMAKGAIDKLPSEGKGPIRVAVESYMEIGRVLREKGPTMKKGRATVPKMRRIRVAWSALNK.

3 consecutive transmembrane segments (helical) span residues 3–23, 35–55, and 65–85; these read WEYA…LAAV, KLVF…SYLI, and GVVV…FFVI. The N-linked (GlcNAc...) asparagine glycan is linked to Asn-89. Helical transmembrane passes span 116–136, 139–159, 171–191, and 214–234; these read IAGQ…VSSG, GMYM…LWSI, NTAL…TFAL, and IEEA…LIAC.

The protein in the N-terminal section; belongs to the lycopene beta-cyclase family. This sequence in the C-terminal section; belongs to the phytoene/squalene synthase family.

It is found in the membrane. The catalysed reaction is all-trans-lycopene = gamma-carotene. It carries out the reaction gamma-carotene = all-trans-beta-carotene. The enzyme catalyses 2 (2E,6E,10E)-geranylgeranyl diphosphate = 15-cis-phytoene + 2 diphosphate. It functions in the pathway carotenoid biosynthesis; beta-carotene biosynthesis. Its pathway is carotenoid biosynthesis; phytoene biosynthesis; all-trans-phytoene from geranylgeranyl diphosphate: step 1/1. In terms of biological role, bifunctional enzyme; part of the car gene cluster that mediates the biosynthesis of neurosporaxanthin, a carboxylic apocarotenoid acting as an essential protective pigments and leading to orange pigmentation. CarAR catalyzes the first step of the pathway by converting geranylgeranyl diphosphate to phytoene, as well as the later cyclization step that transforms the carB product lycopene into gamma-carotene. CarAR also converts part of gamma-carotene into beta-carotene. Neurosporaxanthin is synthesized from geranyl-geranyl pyrophosphate (GGPP) through several enzymatic activities. Phytoene synthase activity performed by the bifunctional enzyme carAR first produces phytoene from geranyl-geranyl pyrophosphate (GGPP). The phytoene dehydrogenase carB then introduces 4 desaturations to lead to lycopene which is substrate of the carotene cyclase activity of carAR that leads to the production of gamma-carotene. CarB then performs a 5th desaturation reaction to yield torulene. Torulene is the substrate of the dioxidase carT that breaks the molecule, removing five carbon atoms to yield beta-apo-4'-carotenal, whereas the aldehyde dehydrogenase carD mediates the last step by converting beta-apo-4'-carotenal into neurosporaxanthin. The sequence is that of Bifunctional lycopene cyclase/phytoene synthase from Gibberella fujikuroi (strain CBS 195.34 / IMI 58289 / NRRL A-6831) (Bakanae and foot rot disease fungus).